Reading from the N-terminus, the 437-residue chain is Serine--tRNA ligase (437 aa).

Residue 240 to 242 (TAE) participates in L-serine binding. 271–273 (RAE) is an ATP binding site. Glu-294 serves as a coordination point for L-serine. 358 to 361 (EISS) contacts ATP. Ser-394 serves as a coordination point for L-serine.

Belongs to the class-II aminoacyl-tRNA synthetase family. Type-1 seryl-tRNA synthetase subfamily. As to quaternary structure, homodimer. The tRNA molecule binds across the dimer.

It localises to the cytoplasm. The enzyme catalyses tRNA(Ser) + L-serine + ATP = L-seryl-tRNA(Ser) + AMP + diphosphate + H(+). It catalyses the reaction tRNA(Sec) + L-serine + ATP = L-seryl-tRNA(Sec) + AMP + diphosphate + H(+). Its pathway is aminoacyl-tRNA biosynthesis; selenocysteinyl-tRNA(Sec) biosynthesis; L-seryl-tRNA(Sec) from L-serine and tRNA(Sec): step 1/1. Its function is as follows. Catalyzes the attachment of serine to tRNA(Ser). Is also able to aminoacylate tRNA(Sec) with serine, to form the misacylated tRNA L-seryl-tRNA(Sec), which will be further converted into selenocysteinyl-tRNA(Sec). This Methylobacterium nodulans (strain LMG 21967 / CNCM I-2342 / ORS 2060) protein is Serine--tRNA ligase.